The chain runs to 216 residues: Triosephosphate isomerase (216 aa).

7-9 serves as a coordination point for substrate; that stretch reads NLK. His-89 functions as the Electrophile in the catalytic mechanism. The active-site Proton acceptor is Glu-137. Residues Ile-142, Gly-175, and 196–197 each bind substrate; that span reads AS.

Belongs to the triosephosphate isomerase family. In terms of assembly, homotetramer; dimer of dimers.

It is found in the cytoplasm. The enzyme catalyses D-glyceraldehyde 3-phosphate = dihydroxyacetone phosphate. It participates in carbohydrate biosynthesis; gluconeogenesis. It functions in the pathway carbohydrate degradation; glycolysis; D-glyceraldehyde 3-phosphate from glycerone phosphate: step 1/1. Involved in the gluconeogenesis. Catalyzes stereospecifically the conversion of dihydroxyacetone phosphate (DHAP) to D-glyceraldehyde-3-phosphate (G3P). The polypeptide is Triosephosphate isomerase (Thermoplasma acidophilum (strain ATCC 25905 / DSM 1728 / JCM 9062 / NBRC 15155 / AMRC-C165)).